The primary structure comprises 123 residues: MLQNSELLQEYLPIAIFFGIAVLVSGLIMILPNLLSTKKYNKDKLEPYECGFEPFSDARSKFDICFYLVAILFIIFDLEIAFLVPWAISLNTIGKIGFFSMMFFLFVLIIGFIYEWKKGALDW.

The next 3 membrane-spanning stretches (helical) occupy residues 11–31 (YLPIAIFFGIAVLVSGLIMIL), 64–84 (ICFYLVAILFIIFDLEIAFLV), and 93–113 (IGKIGFFSMMFFLFVLIIGFI).

It belongs to the complex I subunit 3 family. In terms of assembly, NDH-1 is composed of 14 different subunits. Subunits NuoA, H, J, K, L, M, N constitute the membrane sector of the complex.

The protein localises to the cell inner membrane. The enzyme catalyses a quinone + NADH + 5 H(+)(in) = a quinol + NAD(+) + 4 H(+)(out). Its function is as follows. NDH-1 shuttles electrons from NADH, via FMN and iron-sulfur (Fe-S) centers, to quinones in the respiratory chain. The immediate electron acceptor for the enzyme in this species is believed to be ubiquinone. Couples the redox reaction to proton translocation (for every two electrons transferred, four hydrogen ions are translocated across the cytoplasmic membrane), and thus conserves the redox energy in a proton gradient. In Rickettsia conorii (strain ATCC VR-613 / Malish 7), this protein is NADH-quinone oxidoreductase subunit A.